We begin with the raw amino-acid sequence, 360 residues long: Phospho-N-acetylmuramoyl-pentapeptide-transferase (360 aa).

Transmembrane regions (helical) follow at residues 24–44 (RAVMAALTALAFSLMFGPWTI), 69–89 (GTPTMGGSLILTAITVSTLLW), 92–112 (WANPYIWILLGVLLATGALGF), 133–153 (MVWQSSVAIIAGLALFYLAAN), 158–178 (ILIVPFFKQIALPLGVVGFLV), 199–219 (GLATFPVVLVAAGLAIFAYVS), 239–259 (VAIFCTAMCGACLGFLWFNAY), 263–283 (VFMGDVGALALGAALGTVAVI), 288–308 (FVLVIMGGLFVVEAVSVMLQV), and 337–357 (QVVVRFWIITIVLVLIGLSTL).

Belongs to the glycosyltransferase 4 family. MraY subfamily. Mg(2+) is required as a cofactor.

It is found in the cell inner membrane. The enzyme catalyses UDP-N-acetyl-alpha-D-muramoyl-L-alanyl-gamma-D-glutamyl-meso-2,6-diaminopimeloyl-D-alanyl-D-alanine + di-trans,octa-cis-undecaprenyl phosphate = di-trans,octa-cis-undecaprenyl diphospho-N-acetyl-alpha-D-muramoyl-L-alanyl-D-glutamyl-meso-2,6-diaminopimeloyl-D-alanyl-D-alanine + UMP. Its pathway is cell wall biogenesis; peptidoglycan biosynthesis. In terms of biological role, catalyzes the initial step of the lipid cycle reactions in the biosynthesis of the cell wall peptidoglycan: transfers peptidoglycan precursor phospho-MurNAc-pentapeptide from UDP-MurNAc-pentapeptide onto the lipid carrier undecaprenyl phosphate, yielding undecaprenyl-pyrophosphoryl-MurNAc-pentapeptide, known as lipid I. The polypeptide is Phospho-N-acetylmuramoyl-pentapeptide-transferase (Neisseria meningitidis serogroup C (strain 053442)).